The sequence spans 865 residues: Bifunctional uridylyltransferase/uridylyl-removing enzyme (865 aa).

Positions 1-318 (MPHVDLNPLK…FPRPDSDARL (318 aa)) are uridylyltransferase. Residues 319 to 675 (IDDDFRNLRE…VRPTEHGEGL (357 aa)) are uridylyl-removing. The HD domain maps to 437–559 (VDQHTLAVVR…VGDERRLAAL (123 aa)). ACT domains are found at residues 676-762 (QVMV…RLPH) and 789-865 (RLSV…QQAA). The segment at 747–767 (DPHAARHAHAPRRLPHSHARR) is disordered. A compositionally biased stretch (basic residues) spans 751–767 (ARHAHAPRRLPHSHARR).

Belongs to the GlnD family. It depends on Mg(2+) as a cofactor.

The catalysed reaction is [protein-PII]-L-tyrosine + UTP = [protein-PII]-uridylyl-L-tyrosine + diphosphate. The enzyme catalyses [protein-PII]-uridylyl-L-tyrosine + H2O = [protein-PII]-L-tyrosine + UMP + H(+). With respect to regulation, uridylyltransferase (UTase) activity is inhibited by glutamine, while glutamine activates uridylyl-removing (UR) activity. Its function is as follows. Modifies, by uridylylation and deuridylylation, the PII regulatory proteins (GlnB and homologs), in response to the nitrogen status of the cell that GlnD senses through the glutamine level. Under low glutamine levels, catalyzes the conversion of the PII proteins and UTP to PII-UMP and PPi, while under higher glutamine levels, GlnD hydrolyzes PII-UMP to PII and UMP (deuridylylation). Thus, controls uridylylation state and activity of the PII proteins, and plays an important role in the regulation of nitrogen assimilation and metabolism. This chain is Bifunctional uridylyltransferase/uridylyl-removing enzyme, found in Bordetella pertussis (strain Tohama I / ATCC BAA-589 / NCTC 13251).